Reading from the N-terminus, the 424-residue chain is MSNANPFFSQSLAERDASVRGAILKELERQQSQVELIASENIVSRAVLDAQGSVLTNKYAEGYPGKRYYGGCEFADEVEALAIERVKRLFNAGHANVQPHSGAQANGAVMLALAKPGDTVLGMSLDAGGHLTHGAKPALSGKWFNALQYGVSRDTMLLDYDQVEALAQQHKPSLIIAGFSAYPRKLDFARFRAIADSVGAKLMVDMAHIAGVIAAGRHANPVEHAHVVTSTTHKTLRGPRGGFVLTNDEEIAKKINSAVFPGLQGGPLMHVIAGKAVAFGEALTDDFKTYIDHVLANAQALGDVLKAGGVDLVTGGTDNHLLLVDLRPKGLKGAQVEQALERAGITCNKNGIPFDPEKPTITSGIRLGTPAGTTRGFGAAEFREVGRLILEVFEALRTNPEGDHATEQRVRREIFALCERFPIY.

(6S)-5,6,7,8-tetrahydrofolate-binding positions include L125 and 129-131; that span reads GHL. K234 bears the N6-(pyridoxal phosphate)lysine mark. Residue E250 coordinates (6S)-5,6,7,8-tetrahydrofolate.

Belongs to the SHMT family. In terms of assembly, homodimer. The cofactor is pyridoxal 5'-phosphate.

The protein resides in the cytoplasm. It catalyses the reaction (6R)-5,10-methylene-5,6,7,8-tetrahydrofolate + glycine + H2O = (6S)-5,6,7,8-tetrahydrofolate + L-serine. It participates in one-carbon metabolism; tetrahydrofolate interconversion. It functions in the pathway amino-acid biosynthesis; glycine biosynthesis; glycine from L-serine: step 1/1. Its function is as follows. Catalyzes the reversible interconversion of serine and glycine with tetrahydrofolate (THF) serving as the one-carbon carrier. This reaction serves as the major source of one-carbon groups required for the biosynthesis of purines, thymidylate, methionine, and other important biomolecules. Also exhibits THF-independent aldolase activity toward beta-hydroxyamino acids, producing glycine and aldehydes, via a retro-aldol mechanism. The chain is Serine hydroxymethyltransferase 2 from Burkholderia mallei (strain ATCC 23344).